The sequence spans 284 residues: tRNA uridine(34) hydroxylase (284 aa).

Residues 132-226 (TGRPVVMLDT…YFEEVGGAHY (95 aa)) form the Rhodanese domain. Cys186 acts as the Cysteine persulfide intermediate in catalysis.

It belongs to the TrhO family.

The enzyme catalyses uridine(34) in tRNA + AH2 + O2 = 5-hydroxyuridine(34) in tRNA + A + H2O. Functionally, catalyzes oxygen-dependent 5-hydroxyuridine (ho5U) modification at position 34 in tRNAs. This Burkholderia cenocepacia (strain ATCC BAA-245 / DSM 16553 / LMG 16656 / NCTC 13227 / J2315 / CF5610) (Burkholderia cepacia (strain J2315)) protein is tRNA uridine(34) hydroxylase.